The sequence spans 152 residues: Putative NrdI-like protein (152 aa).

This sequence belongs to the NrdI family.

This Streptococcus pyogenes serotype M18 (strain MGAS8232) protein is Putative NrdI-like protein.